Consider the following 1713-residue polypeptide: uncharacterized protein (1713 aa).

Over residues 1–12 (MNENEFSTNSLI) the composition is skewed to polar residues. Disordered regions lie at residues 1-35 (MNENEFSTNSLINQQGTNNNNNNNTNNNITNINFG), 79-200 (QQLN…KLSN), 226-290 (GNNN…QPLS), 309-557 (QYLS…PMSH), 713-734 (SNDQNDRVPIHQLGGATGKKDR), 808-952 (SPPM…SITT), and 1143-1190 (HHHH…SISR). Low complexity-rich tracts occupy residues 13 to 35 (NQQGTNNNNNNNTNNNITNINFG), 79 to 109 (QQLNTPPTTPNTSTPSTPTSSRNNNNNNNNN), 126 to 170 (NNSG…NSGN), 177 to 200 (NMSDITNDNSNSSSNAGSNSKLSN), and 226 to 264 (GNNNYHNGNNENGNNTFHVGNNLNNNNNNNNIGSSGGNN). Positions 265–276 (SHHHHNHSHHNS) are enriched in basic residues. 2 stretches are compositionally biased toward low complexity: residues 317–470 (NNIN…SPAS) and 478–489 (SNNFGGNHNNYN). The segment covering 490 to 504 (HAHHSHHNNHAHHNT) has biased composition (basic residues). Low complexity predominate over residues 505–553 (HNYNNNNNNNNNNNNNNNNNNNNSNNSNNNSNTNNNGNNGNNSNNNNNH). Residues 544–825 (GNNSNNNNNH…QNPGRFLNHD (282 aa)) constitute a DNA-binding region (NDT80). The span at 822-832 (LNHDKSLKKDP) shows a compositional bias: basic and acidic residues. Residues 838-874 (GGKGGGGSGSGGMGGGMGGGMGNNGSSGSSSNGGYGN) are compositionally biased toward gly residues. Composition is skewed to low complexity over residues 898-946 (SPTT…PTLT) and 1148-1189 (QQQQ…SSIS). Positions 1240–1355 (SDQRIKSNIR…RSLKKEKDHI (116 aa)) constitute a Peptidase S74 domain. 3 consecutive transmembrane segments (helical) span residues 1416–1436 (TMFVFGFFIPICWIIGSFYLF), 1447–1467 (LMNFVATIIFILALSLMTFYV), and 1473–1493 (LIIAPALIVMGFVVCILVGFF). Over residues 1596-1605 (NSNNNINNNN) the composition is skewed to low complexity. Disordered stretches follow at residues 1596–1634 (NSNNNINNNNQERLSDSSKSSFIDDFKKSSSNNHKDFHE) and 1646–1665 (IKGKKQSSSSAKTRSLSSSN). Residues 1617–1634 (FIDDFKKSSSNNHKDFHE) show a composition bias toward basic and acidic residues.

Its subcellular location is the membrane. This is an uncharacterized protein from Dictyostelium discoideum (Social amoeba).